A 239-amino-acid chain; its full sequence is tRNA (guanine-N(7)-)-methyltransferase (239 aa).

4 residues coordinate S-adenosyl-L-methionine: Glu69, Glu94, Asp121, and Asp144. Residue Asp144 is part of the active site. Lys148 lines the substrate pocket. The interaction with RNA stretch occupies residues 150–155; that stretch reads RHNKRR. Substrate contacts are provided by residues Asp180 and 217–220; that span reads TKFE.

Belongs to the class I-like SAM-binding methyltransferase superfamily. TrmB family. In terms of assembly, monomer.

It carries out the reaction guanosine(46) in tRNA + S-adenosyl-L-methionine = N(7)-methylguanosine(46) in tRNA + S-adenosyl-L-homocysteine. It participates in tRNA modification; N(7)-methylguanine-tRNA biosynthesis. Functionally, catalyzes the formation of N(7)-methylguanine at position 46 (m7G46) in tRNA. This is tRNA (guanine-N(7)-)-methyltransferase from Photorhabdus laumondii subsp. laumondii (strain DSM 15139 / CIP 105565 / TT01) (Photorhabdus luminescens subsp. laumondii).